An 874-amino-acid polypeptide reads, in one-letter code: MTQLPHVRVDHMPQIRVLPVLPLDDAVVLPGMVVSLDMSDEQTRAAVDAARTGGSAGSSDARAPGISSRAAGRPAEVLLVPRVGGELAEVATVGVIEQVGRLPRGGSAAVVRGTARAQVGGVRPAPAGTDTTGTGTADATSGAGSGAGVQWVDAVVLDDSAATPFGALDDPAGTRAGSPADEAARVDKLAKEYRALVTDLLRQRGAWQVVDSVSAITDPGTLADTAGYSSYLTTAQKIELLGTPAVGTRLERLLTWTKEHLAEQDVAETIRRDVQEGMDRQQREFLLRRQLEAVRKELSELDGSGGGADGASGSEPADYRARVEAADLPEKVRAAALKEVDKLERTSDSSPEGGWIRTWLDTVLDLPWNVRAEDSYDIIAARAVLDADHAGLDDVKDRIIEHLAVRRRRADAGLGVVGGRRGGAVLALAGPPGVGKTSLGESIARAMGRSFVRVALGGVRDEAEIRGHRRTYVGALPGRIVRAIREAGSMNPVVLLDEVDKLGADYRGDPTAALLEVLDPEQNHTFRDHYLEVELDLSDVLFLATANVLEAIPAPLLDRMELIRLDGYTEDEKVVIARDHLLHRQLDRAGLAEGDVSVGDDALHALAGEYTREAGVRDLERSIARLLRKVVAQVALGAAALPVTIDAGDLTGYLGRPRHTPESAERTALPGVATGLAVTGAGGDVLFVEASLADAETGGGGITLTGQLGDVMKESAQIALSYLRSHGVELELPVGDLADRGVHVHVPAGAVPKDGPSAGVTMTTALASLLSGRPVRADVAMTGEVSLTGRVLPIGGVKQKLLAAHRAGLTTVLLPQRNGPDLDDVPAPVRDALTVHLVTDVREVLDLALEPAFDADHGGRSPGRAGHSPTALAA.

Residues 18–261 (LPVLPLDDAV…RLLTWTKEHL (244 aa)) form the Lon N-terminal domain. 3 disordered regions span residues 47 to 68 (VDAARTGGSAGSSDARAPGISS), 120 to 144 (GGVRPAPAGTDTTGTGTADATSGAG), and 298 to 318 (LSELDGSGGGADGASGSEPAD). Over residues 124-142 (PAPAGTDTTGTGTADATSG) the composition is skewed to low complexity. 430-437 (GPPGVGKT) is a binding site for ATP. Residues 667–851 (TALPGVATGL…REVLDLALEP (185 aa)) form the Lon proteolytic domain. Catalysis depends on residues Ser757 and Lys800. The disordered stretch occupies residues 853–874 (FDADHGGRSPGRAGHSPTALAA).

It belongs to the peptidase S16 family. Homohexamer. Organized in a ring with a central cavity.

It is found in the cytoplasm. The enzyme catalyses Hydrolysis of proteins in presence of ATP.. Its function is as follows. ATP-dependent serine protease that mediates the selective degradation of mutant and abnormal proteins as well as certain short-lived regulatory proteins. Required for cellular homeostasis and for survival from DNA damage and developmental changes induced by stress. Degrades polypeptides processively to yield small peptide fragments that are 5 to 10 amino acids long. Binds to DNA in a double-stranded, site-specific manner. The chain is Lon protease from Frankia alni (strain DSM 45986 / CECT 9034 / ACN14a).